Here is a 413-residue protein sequence, read N- to C-terminus: Arogenate dehydratase/prephenate dehydratase 6, chloroplastic (413 aa).

A chloroplast-targeting transit peptide spans 1–44 (MKALSSSSPILGASQPATATALIARSGRSEWQSSCAILTSKVIS). The region spanning 117–294 (RVAYQGVPGA…NVTRFVMLAR (178 aa)) is the Prephenate dehydratase domain. Residues 308–399 (SIVFAHEKGT…SFLRVLGSYP (92 aa)) form the ACT domain.

In terms of tissue distribution, expressed in roots, leaves, stems, flowers and siliques.

It localises to the plastid. The protein resides in the chloroplast stroma. The enzyme catalyses L-arogenate + H(+) = L-phenylalanine + CO2 + H2O. It carries out the reaction prephenate + H(+) = 3-phenylpyruvate + CO2 + H2O. The protein operates within amino-acid biosynthesis; L-phenylalanine biosynthesis; L-phenylalanine from L-arogenate: step 1/1. It functions in the pathway amino-acid biosynthesis; L-phenylalanine biosynthesis; phenylpyruvate from prephenate: step 1/1. Functionally, converts the prephenate produced from the shikimate-chorismate pathway into phenylalanine. Dehydratase that uses arogenate and prephenate as substrates. Utilzes more efficiently arogenate than prephenate. In Arabidopsis thaliana (Mouse-ear cress), this protein is Arogenate dehydratase/prephenate dehydratase 6, chloroplastic.